The following is a 283-amino-acid chain: MQVVHTVADLRAALSEADRSAFVPTMGNLHAGHVSLVELAKRHGGPVVASIFVNPLQFGAGEDFERYPRTLAADCDKLAEAGCDLVFAPDTSALYPVAQTFRVDVPAALAEDLCGAFRPGHFAGVATVVLKLFNLVRPQVAVFGRKDYQQLLVVREMVRQFNLPIDIVAGATLRDPDGLAMSSRNGYLSAAERAQAPQLQRELAAIVAAIDGGARNFAALAAAARQRLTGAGWRVDYVEIRDAESLKTATQETEALVVLAAAWLGQTRLIDNLEVTSAAGIAA.

26 to 33 (MGNLHAGH) is an ATP binding site. Residue His-33 is the Proton donor of the active site. A (R)-pantoate-binding site is contributed by Gln-57. Position 57 (Gln-57) interacts with beta-alanine. 144–147 (GRKD) contributes to the ATP binding site. Position 150 (Gln-150) interacts with (R)-pantoate. Residues Leu-173 and 181–184 (MSSR) contribute to the ATP site.

Belongs to the pantothenate synthetase family. Homodimer.

It localises to the cytoplasm. The catalysed reaction is (R)-pantoate + beta-alanine + ATP = (R)-pantothenate + AMP + diphosphate + H(+). Its pathway is cofactor biosynthesis; (R)-pantothenate biosynthesis; (R)-pantothenate from (R)-pantoate and beta-alanine: step 1/1. Catalyzes the condensation of pantoate with beta-alanine in an ATP-dependent reaction via a pantoyl-adenylate intermediate. In Thiobacillus denitrificans (strain ATCC 25259 / T1), this protein is Pantothenate synthetase.